We begin with the raw amino-acid sequence, 93 residues long: Vacuolar ATPase assembly integral membrane protein VMA21 (93 aa).

Topologically, residues 1-21 (MSNRVSTGKMAMAPQESVQPA) are cytoplasmic. A helical transmembrane segment spans residues 22 to 42 (VLYKLVLFALLMAVVPIGTYF). The Lumenal segment spans residues 43–54 (STLNYLWDGSTT). A helical transmembrane segment spans residues 55 to 75 (FAAISAIAAANLILVGYVVVA). The Cytoplasmic segment spans residues 76 to 93 (FREDAASRTGPLPEKKTS). The Prevents secretion from ER signature appears at 90–93 (KKTS).

Belongs to the VMA21 family.

The protein resides in the endoplasmic reticulum membrane. Its subcellular location is the endoplasmic reticulum-Golgi intermediate compartment membrane. It is found in the cytoplasmic vesicle. The protein localises to the COPII-coated vesicle membrane. Required for the assembly of the V0 complex of the vacuolar ATPase (V-ATPase) in the endoplasmic reticulum. In Cryptococcus neoformans var. neoformans serotype D (strain JEC21 / ATCC MYA-565) (Filobasidiella neoformans), this protein is Vacuolar ATPase assembly integral membrane protein VMA21.